The following is a 552-amino-acid chain: uncharacterized protein (552 aa).

This is an uncharacterized protein from Methanocaldococcus jannaschii (strain ATCC 43067 / DSM 2661 / JAL-1 / JCM 10045 / NBRC 100440) (Methanococcus jannaschii).